We begin with the raw amino-acid sequence, 516 residues long: GMP synthase [glutamine-hydrolyzing] (516 aa).

Positions 8–198 constitute a Glutamine amidotransferase type-1 domain; that stretch reads KILILDFGSQ…VVNICGCDTL (191 aa). Cys-84 acts as the Nucleophile in catalysis. Active-site residues include His-172 and Glu-174. A GMPS ATP-PPase domain is found at 199–391; sequence WNIENIIEND…LGLPYNMLYR (193 aa). An ATP-binding site is contributed by 226-232; it reads SGGVDSS.

Homodimer.

It catalyses the reaction XMP + L-glutamine + ATP + H2O = GMP + L-glutamate + AMP + diphosphate + 2 H(+). Its pathway is purine metabolism; GMP biosynthesis; GMP from XMP (L-Gln route): step 1/1. Its function is as follows. Catalyzes the synthesis of GMP from XMP. This chain is GMP synthase [glutamine-hydrolyzing], found in Francisella tularensis subsp. tularensis (strain WY96-3418).